The primary structure comprises 462 residues: tRNA wybutosine-synthesizing protein 2 (462 aa).

S-adenosyl-L-methionine contacts are provided by residues Ser257, Lys264, and 305–306 (EL).

It belongs to the class I-like SAM-binding methyltransferase superfamily. TRM5/TYW2 family.

The protein resides in the cytoplasm. The enzyme catalyses 4-demethylwyosine(37) in tRNA(Phe) + S-adenosyl-L-methionine = 4-demethyl-7-[(3S)-3-amino-3-carboxypropyl]wyosine(37) in tRNA(Phe) + S-methyl-5'-thioadenosine + H(+). Its pathway is tRNA modification; wybutosine-tRNA(Phe) biosynthesis. S-adenosyl-L-methionine-dependent transferase that acts as a component of the wybutosine biosynthesis pathway. Wybutosine is a hyper modified guanosine with a tricyclic base found at the 3'-position adjacent to the anticodon of eukaryotic phenylalanine tRNA. Catalyzes the transfer of the alpha-amino-alpha-carboxypropyl (acp) group from S-adenosyl-L-methionine to the C-7 position of 4-demethylwyosine (imG-14) to produce wybutosine-86. The sequence is that of tRNA wybutosine-synthesizing protein 2 (TRM12) from Saccharomyces cerevisiae (strain ATCC 204508 / S288c) (Baker's yeast).